Reading from the N-terminus, the 1414-residue chain is DNA-directed RNA polymerase subunit beta'' (1414 aa).

4 residues coordinate Zn(2+): cysteine 220, cysteine 293, cysteine 300, and cysteine 303.

This sequence belongs to the RNA polymerase beta' chain family. RpoC2 subfamily. In terms of assembly, in plastids the minimal PEP RNA polymerase catalytic core is composed of four subunits: alpha, beta, beta', and beta''. When a (nuclear-encoded) sigma factor is associated with the core the holoenzyme is formed, which can initiate transcription. The cofactor is Zn(2+).

The protein localises to the plastid. Its subcellular location is the chloroplast. The catalysed reaction is RNA(n) + a ribonucleoside 5'-triphosphate = RNA(n+1) + diphosphate. Functionally, DNA-dependent RNA polymerase catalyzes the transcription of DNA into RNA using the four ribonucleoside triphosphates as substrates. The protein is DNA-directed RNA polymerase subunit beta'' of Angiopteris evecta (Mule's foot fern).